The following is a 155-amino-acid chain: MSRRGTAEEKTAKSDPIYRNRLVNMLVNRILKHGKKSLAYQIIYRAVKKIQQKTETNPLSVLRQAIRGVTPDIAVKARRVGGSTHQVPIEIGSTQGKALAIRWLLGASRKRPGRNMAFKLSSELVDAAKGSGDAIRKKEETHRMAEANRAFAHFR.

It belongs to the universal ribosomal protein uS7 family. As to quaternary structure, part of the 30S ribosomal subunit.

It localises to the plastid. It is found in the chloroplast. In terms of biological role, one of the primary rRNA binding proteins, it binds directly to 16S rRNA where it nucleates assembly of the head domain of the 30S subunit. The protein is Small ribosomal subunit protein uS7cz/uS7cy (rps7-A) of Drimys granadensis.